A 199-amino-acid chain; its full sequence is NAD(P)H dehydrogenase (quinone) 1 (199 aa).

The Flavodoxin-like domain maps to 4–190 (VLVLYYSAYG…EAARFQGAHV (187 aa)). Residues 10–15 (SAYGHI) and 78–80 (TRY) contribute to the FMN site. Residue Tyr12 participates in NAD(+) binding. Trp98 is a substrate binding site. FMN is bound by residues 113 to 119 (SSATQHG) and His134.

It belongs to the WrbA family. The cofactor is FMN.

It carries out the reaction a quinone + NADH + H(+) = a quinol + NAD(+). The catalysed reaction is a quinone + NADPH + H(+) = a quinol + NADP(+). The protein is NAD(P)H dehydrogenase (quinone) 1 of Rhizobium meliloti (strain 1021) (Ensifer meliloti).